The primary structure comprises 116 residues: Tyrosine-protein phosphatase 10 (116 aa).

The Tyrosine-protein phosphatase domain maps to 1 to 116 (WRMVWEQNVS…SPTGYGPIVV (116 aa)). Aspartate 86 is a binding site for substrate.

The protein belongs to the protein-tyrosine phosphatase family.

The enzyme catalyses O-phospho-L-tyrosyl-[protein] + H2O = L-tyrosyl-[protein] + phosphate. This Styela plicata (Wrinkled sea squirt) protein is Tyrosine-protein phosphatase 10 (STY-10).